A 310-amino-acid chain; its full sequence is Mitogen-activated protein kinase kinase 9 (310 aa).

One can recognise a Protein kinase domain in the interval 47 to 306 (LEKLNVLGCG…APQLLAHPFL (260 aa)). ATP is bound by residues 53–61 (LGCGNGGIV) and Lys-76. The active-site Proton acceptor is Asp-167. Ser-195 and Ser-201 each carry phosphoserine. Phosphothreonine is present on Thr-205.

Belongs to the protein kinase superfamily. STE Ser/Thr protein kinase family. MAP kinase kinase subfamily. In terms of processing, phosphorylation at Ser-195 and Ser-201 by MAP kinase kinase kinases positively regulates kinase activity. Autophosphorylated.

It is found in the cytoplasm. Its subcellular location is the nucleus. The enzyme catalyses L-seryl-[protein] + ATP = O-phospho-L-seryl-[protein] + ADP + H(+). It carries out the reaction L-threonyl-[protein] + ATP = O-phospho-L-threonyl-[protein] + ADP + H(+). The catalysed reaction is L-tyrosyl-[protein] + ATP = O-phospho-L-tyrosyl-[protein] + ADP + H(+). Its function is as follows. MKK9-MPK3/MPK6 module phosphorylates and activates EIN3, leading to the promotion of EIN3-mediated transcription in ethylene signaling. Autophosphorylates and also phosphorylates MPK3 and MPK6. Plays an important role in ethylene and camalexin biosynthesis and in salt stress response. MKK9-MPK6 module positively regulates leaf senescence. The protein is Mitogen-activated protein kinase kinase 9 (MKK9) of Arabidopsis thaliana (Mouse-ear cress).